A 155-amino-acid polypeptide reads, in one-letter code: MRVGYGYDVHRLVDGRPLVLGGVTIPFDKGLKGHSDADVLLHAVCDALLGAAGLGDIGMHFPDKDPKYKNIASTRLLEETGRKIAQEGYKIVNLDATLVAEAPKIGPYRQEMVSVIAKCLGLENRQVNVKATTTEGLGITGRGEGMAATCVACLE.

A divalent metal cation-binding residues include D8 and H10. Residues 8–10 (DVH) and 34–35 (HS) each bind 4-CDP-2-C-methyl-D-erythritol 2-phosphate. A divalent metal cation is bound at residue H42. 4-CDP-2-C-methyl-D-erythritol 2-phosphate contacts are provided by residues 56 to 58 (DIG), 61 to 65 (FPDKD), 132 to 135 (TTTE), and R142.

The protein belongs to the IspF family. In terms of assembly, homotrimer. A divalent metal cation serves as cofactor.

It carries out the reaction 4-CDP-2-C-methyl-D-erythritol 2-phosphate = 2-C-methyl-D-erythritol 2,4-cyclic diphosphate + CMP. It participates in isoprenoid biosynthesis; isopentenyl diphosphate biosynthesis via DXP pathway; isopentenyl diphosphate from 1-deoxy-D-xylulose 5-phosphate: step 4/6. In terms of biological role, involved in the biosynthesis of isopentenyl diphosphate (IPP) and dimethylallyl diphosphate (DMAPP), two major building blocks of isoprenoid compounds. Catalyzes the conversion of 4-diphosphocytidyl-2-C-methyl-D-erythritol 2-phosphate (CDP-ME2P) to 2-C-methyl-D-erythritol 2,4-cyclodiphosphate (ME-CPP) with a corresponding release of cytidine 5-monophosphate (CMP). This Desulfatibacillum aliphaticivorans protein is 2-C-methyl-D-erythritol 2,4-cyclodiphosphate synthase.